Reading from the N-terminus, the 100-residue chain is MHFTQREQDKLMLVIAADLARRRQQRGLKLNYPEAVAIISFELLEGARDGKTVAELMSYGKQILGEDDVMEGVADMLTEMEIEATFPDGTKLITVHHPIV.

The protein belongs to the urease gamma subunit family. In terms of assembly, heterotrimer of UreA (gamma), UreB (beta) and UreC (alpha) subunits. Three heterotrimers associate to form the active enzyme.

The protein localises to the cytoplasm. It carries out the reaction urea + 2 H2O + H(+) = hydrogencarbonate + 2 NH4(+). Its pathway is nitrogen metabolism; urea degradation; CO(2) and NH(3) from urea (urease route): step 1/1. This Staphylococcus xylosus protein is Urease subunit gamma.